A 308-amino-acid polypeptide reads, in one-letter code: UPF0282 protein YG5714_2245 (308 aa).

The protein belongs to the UPF0282 family.

This chain is UPF0282 protein YG5714_2245, found in Saccharolobus islandicus (strain Y.G.57.14 / Yellowstone #1) (Sulfolobus islandicus).